We begin with the raw amino-acid sequence, 256 residues long: Hydroxyethylthiazole kinase (256 aa).

Met-37 contributes to the substrate binding site. Residues Lys-113 and Thr-159 each coordinate ATP. Gly-186 lines the substrate pocket.

The protein belongs to the Thz kinase family. Requires Mg(2+) as cofactor.

The catalysed reaction is 5-(2-hydroxyethyl)-4-methylthiazole + ATP = 4-methyl-5-(2-phosphooxyethyl)-thiazole + ADP + H(+). It participates in cofactor biosynthesis; thiamine diphosphate biosynthesis; 4-methyl-5-(2-phosphoethyl)-thiazole from 5-(2-hydroxyethyl)-4-methylthiazole: step 1/1. Functionally, catalyzes the phosphorylation of the hydroxyl group of 4-methyl-5-beta-hydroxyethylthiazole (THZ). This chain is Hydroxyethylthiazole kinase, found in Exiguobacterium sibiricum (strain DSM 17290 / CCUG 55495 / CIP 109462 / JCM 13490 / 255-15).